Reading from the N-terminus, the 619-residue chain is Zinc finger protein 668 (619 aa).

At M1 the chain carries N-acetylmethionine. S10 carries the phosphoserine modification. The C2H2-type 1 zinc-finger motif lies at 22–44 (YKCLSCTKTFPNAPRAARHAATH). Residues 34-79 (APRAARHAATHGPADCSEEVAEVKPKPETEAKAEEASGEKVSGSAA) are disordered. Residues 54–71 (AEVKPKPETEAKAEEASG) are compositionally biased toward basic and acidic residues. Glycyl lysine isopeptide (Lys-Gly) (interchain with G-Cter in SUMO2) cross-links involve residues K57, K59, K65, and K80. C2H2-type zinc fingers lie at residues 84–106 (YACP…GRSH), 112–134 (FPCP…LASH), 140–162 (FRCA…QRGH), 168–190 (YACA…RRTH), 196–218 (YSCE…ERSH), 224–246 (FLCS…QRIH), 252–274 (YRCP…ERTH), 280–302 (FLCP…QRAH), 308–330 (YHCE…RRVH), 336–358 (FKCL…ALVH), and 364–386 (FRCE…SRVH). A Glycyl lysine isopeptide (Lys-Gly) (interchain with G-Cter in SUMO2) cross-link involves residue K154. S387 is subject to Phosphoserine. The segment at 392–414 (FHCNACGKSFVVSSSLRKHERTH) adopts a C2H2-type 13 zinc-finger fold. A disordered region spans residues 492 to 513 (REAPGPLEGAGEAGGEEADEKP). A Glycyl lysine isopeptide (Lys-Gly) (interchain with G-Cter in SUMO2) cross-link involves residue K512. C2H2-type zinc fingers lie at residues 516–538 (FVCR…ERSH), 544–566 (FPCT…SRTH), and 572–594 (YTCP…ERTH).

It belongs to the krueppel C2H2-type zinc-finger protein family.

Its subcellular location is the nucleus. May be involved in transcriptional regulation. May play a role in DNA repair process. This Homo sapiens (Human) protein is Zinc finger protein 668 (ZNF668).